We begin with the raw amino-acid sequence, 258 residues long: Beta carbonic anhydrase 3 (258 aa).

The signal sequence occupies residues 1–28 (MSTESYEDAIKRLGELLSKKSDLGNVAA). Residues 24–54 (GNVAAAKIKKLTDELEELDSNKLDAVERIKS) adopt a coiled-coil conformation. The residue at position 35 (Thr35) is a Phosphothreonine. The residue at position 95 (Ser95) is a Phosphoserine. An S-nitrosocysteine modification is found at Cys201.

It belongs to the beta-class carbonic anhydrase family. Strongly expressed in aerial tissues including leaves, stems, flowers and siliques, and, to a lower extent, in roots.

The protein resides in the cytoplasm. It localises to the cytosol. The enzyme catalyses hydrogencarbonate + H(+) = CO2 + H2O. In terms of biological role, reversible hydration of carbon dioxide. In Arabidopsis thaliana (Mouse-ear cress), this protein is Beta carbonic anhydrase 3 (BCA3).